The primary structure comprises 562 residues: Serine palmitoyltransferase 2 (562 aa).

Residues 67-87 (PMLVAVLTYVGYGVLTLFGYL) form a helical membrane-spanning segment. Lysine 379 bears the N6-(pyridoxal phosphate)lysine mark.

It belongs to the class-II pyridoxal-phosphate-dependent aminotransferase family. In terms of assembly, component of the serine palmitoyltransferase (SPT) complex, which is composed of SPTLC1, SPTLC2 or SPTLC3 and SPTSSA or SPTSSB. The heterodimer consisting of SPTLC1 and SPTLC2/SPTLC3 forms the catalytic core of the enzyme, while SPTSSA or SPTSSB subunits determine substrate specificity. SPT also interacts with ORMDL proteins, especially ORMDL3, which negatively regulate SPT activity in the presence of ceramides. Forms dimers of heterodimers with SPTLC1. Requires pyridoxal 5'-phosphate as cofactor. Widely expressed.

It is found in the endoplasmic reticulum membrane. The catalysed reaction is L-serine + hexadecanoyl-CoA + H(+) = 3-oxosphinganine + CO2 + CoA. It catalyses the reaction octadecanoyl-CoA + L-serine + H(+) = 3-oxoeicosasphinganine + CO2 + CoA. Its pathway is lipid metabolism; sphingolipid metabolism. SPT complex catalytic activity is negatively regulated by ORMDL proteins, including ORMDL3, in the presence of ceramides. This mechanism allows to maintain ceramide levels at sufficient concentrations for the production of complex sphingolipids, but which prevents the accumulation of ceramides to levels that trigger apoptosis. Its function is as follows. Component of the serine palmitoyltransferase multisubunit enzyme (SPT) that catalyzes the initial and rate-limiting step in sphingolipid biosynthesis by condensing L-serine and activated acyl-CoA (most commonly palmitoyl-CoA) to form long-chain bases. The SPT complex is composed of SPTLC1, SPTLC2 or SPTLC3 and SPTSSA or SPTSSB. Within this complex, the heterodimer consisting of SPTLC1 and SPTLC2/SPTLC3 forms the catalytic core. The composition of the serine palmitoyltransferase (SPT) complex determines the substrate preference. The SPTLC1-SPTLC2-SPTSSA complex shows a strong preference for C16-CoA substrate, while the SPTLC1-SPTLC3-SPTSSA isozyme uses both C14-CoA and C16-CoA as substrates, with a slight preference for C14-CoA. The SPTLC1-SPTLC2-SPTSSB complex shows a strong preference for C18-CoA substrate, while the SPTLC1-SPTLC3-SPTSSB isozyme displays an ability to use a broader range of acyl-CoAs, without apparent preference. Crucial for adipogenesis. The chain is Serine palmitoyltransferase 2 from Homo sapiens (Human).